Here is a 206-residue protein sequence, read N- to C-terminus: uncharacterized protein (206 aa).

Disordered regions lie at residues 64–123 (NTES…DPSL) and 155–206 (VTTP…SSGG). A compositionally biased stretch (polar residues) spans 66 to 79 (ESTQKTATTQQQGL). A compositionally biased stretch (low complexity) spans 97 to 107 (AENNAQANQSE). Positions 108–118 (NRAESTTKAES) are enriched in basic and acidic residues. Positions 155-167 (VTTPTGQVVQPQT) are enriched in low complexity. Over residues 182–198 (GSMNSKPVSRGGFSSPN) the composition is skewed to polar residues.

This is an uncharacterized protein from Haemophilus influenzae (strain ATCC 51907 / DSM 11121 / KW20 / Rd).